The primary structure comprises 649 residues: Microtubule-associated protein VP6 (649 aa).

Its subcellular location is the virion. The protein localises to the host cytoplasm. The protein resides in the host cytoskeleton. Minor inner capsid component. Displays NTPase and RNA 5'-triphosphatase (RTPase) activities. May function as a cofactor of polymerase VP2. Associates with microtubules and plays a role in the formation, structural organization and morphology of viral inclusions, where the assembly of cores and the replication of viral RNA occur. This is Microtubule-associated protein VP6 (S6) from Cryphonectria parasitica (Chestnut blight fungus).